Reading from the N-terminus, the 83-residue chain is Kunitz-type serine protease inhibitor scutellin-4 (83 aa).

Residues 1-24 form the signal peptide; it reads MSSGGLLLLLGLLTLWAELTPVSS. The BPTI/Kunitz inhibitor domain maps to 31 to 81; it reads CELPADSGPCRGILHAFYYHPVHRTCLGFIYGGCYGNANNFKTIDECKRTC. Disulfide bonds link Cys31–Cys81, Cys40–Cys64, and Cys56–Cys77.

The protein belongs to the venom Kunitz-type family. Expressed by the venom gland.

The protein resides in the secreted. In terms of biological role, serine protease inhibitor. The chain is Kunitz-type serine protease inhibitor scutellin-4 from Oxyuranus scutellatus scutellatus (Australian taipan).